Consider the following 190-residue polypeptide: dTTP/UTP pyrophosphatase (190 aa).

Asp-71 serves as the catalytic Proton acceptor.

The protein belongs to the Maf family. YhdE subfamily. It depends on a divalent metal cation as a cofactor.

The protein resides in the cytoplasm. The catalysed reaction is dTTP + H2O = dTMP + diphosphate + H(+). The enzyme catalyses UTP + H2O = UMP + diphosphate + H(+). Its function is as follows. Nucleoside triphosphate pyrophosphatase that hydrolyzes dTTP and UTP. May have a dual role in cell division arrest and in preventing the incorporation of modified nucleotides into cellular nucleic acids. This chain is dTTP/UTP pyrophosphatase, found in Xanthomonas axonopodis pv. citri (strain 306).